Here is a 40-residue protein sequence, read N- to C-terminus: Photosystem II reaction center protein J (40 aa).

Residues 8 to 28 traverse the membrane as a helical segment; the sequence is IPLWIVGTVTGILVIGLIGVF.

It belongs to the PsbJ family. In terms of assembly, PSII is composed of 1 copy each of membrane proteins PsbA, PsbB, PsbC, PsbD, PsbE, PsbF, PsbH, PsbI, PsbJ, PsbK, PsbL, PsbM, PsbT, PsbX, PsbY, PsbZ, Psb30/Ycf12, at least 3 peripheral proteins of the oxygen-evolving complex and a large number of cofactors. It forms dimeric complexes.

It is found in the plastid. It localises to the chloroplast thylakoid membrane. Its function is as follows. One of the components of the core complex of photosystem II (PSII). PSII is a light-driven water:plastoquinone oxidoreductase that uses light energy to abstract electrons from H(2)O, generating O(2) and a proton gradient subsequently used for ATP formation. It consists of a core antenna complex that captures photons, and an electron transfer chain that converts photonic excitation into a charge separation. The sequence is that of Photosystem II reaction center protein J from Coffea arabica (Arabian coffee).